Reading from the N-terminus, the 61-residue chain is MDPNCSCPTGGSCTCAGSCTCKACRCTSCKKSCCSCCPAGCAKCAQGCICKGASDKCSCCA.

Met-1 carries the N-acetylmethionine modification. A beta region spans residues 1–29; sequence MDPNCSCPTGGSCTCAGSCTCKACRCTSC. Cys-5, Cys-7, Cys-13, Cys-15, Cys-19, Cys-21, Cys-24, Cys-26, Cys-29, Cys-33, Cys-34, Cys-36, Cys-37, Cys-41, Cys-44, Cys-48, Cys-50, and Cys-57 together coordinate a divalent metal cation. The segment at 30–61 is alpha; the sequence is KKSCCSCCPAGCAKCAQGCICKGASDKCSCCA. Ser-58 carries the post-translational modification Phosphoserine. Cys-59 and Cys-60 together coordinate a divalent metal cation.

It belongs to the metallothionein superfamily. Type 1 family. As to quaternary structure, monomer.

In terms of biological role, metallothioneins have a high content of cysteine residues that bind various heavy metals; these proteins are transcriptionally regulated by both heavy metals and glucocorticoids. The protein is Metallothionein-1F (MT1F) of Sus scrofa (Pig).